A 188-amino-acid polypeptide reads, in one-letter code: C-type lectin domain family 5 member A (188 aa).

Residues 1–4 (MNWH) are Cytoplasmic-facing. A helical; Signal-anchor for type II membrane protein transmembrane segment spans residues 5–27 (MIISGLIVVVLKVVGMTLFLLYF). Residues 28 to 188 (PQIFNKSNDG…YRRICEKNAK (161 aa)) lie on the Extracellular side of the membrane. Asn-32 carries N-linked (GlcNAc...) asparagine glycosylation. Cys-71 and Cys-82 are oxidised to a cystine. One can recognise a C-type lectin domain in the interval 78 to 184 (YQARCFFLST…CDISYRRICE (107 aa)). Residues Asn-93, Asn-144, and Asn-151 are each glycosylated (N-linked (GlcNAc...) asparagine). 2 disulfides stabilise this stretch: Cys-99–Cys-183 and Cys-161–Cys-175.

As to quaternary structure, monomer. Homodimer. The majority of CLEC5A is expressed as a monomeric form on macrophages. Interacts with TYROBP/DAP12. The interaction with TYROBP is required for CLEC5A cell surface expression. Interacts with HCST/DAP10. Forms a CLEC5A/TYROBP/HCST trimolecular complex depending almost solely on TYROBP. (Microbial infection) Interacts with dengue virus envelope protein E. Post-translationally, N-glycosylated. Contains sialic acid residues. In terms of tissue distribution, highly expressed in bone marrow with lower levels in synovium, lung and bronchus. Expressed in peripheral blood monocytes and in the monocyte/macrophage cell lines U-937 and Mono-Mac-6, but not in cell lines of other origins. Expression is down-regulated when monocytes differentiate into dendritic cells.

Its subcellular location is the cell membrane. Its function is as follows. Functions as a positive regulator of osteoclastogenesis. Cell surface receptor that signals via TYROBP. Regulates inflammatory responses. In terms of biological role, (Microbial infection) Critical macrophage receptor for dengue virus serotypes 1-4. The binding of dengue virus to CLEC5A triggers signaling through the phosphorylation of TYROBP. This interaction does not result in viral entry, but stimulates pro-inflammatory cytokine release. The polypeptide is C-type lectin domain family 5 member A (CLEC5A) (Homo sapiens (Human)).